A 1010-amino-acid polypeptide reads, in one-letter code: Retinoblastoma-related protein 1 (1010 aa).

The interval 1–23 (MEGAAPPASSGSEVTGAGSGKVD) is disordered. A domain A region spans residues 419–619 (TPVSTAMTTA…EKGSSMYNSL (201 aa)). The interval 419 to 861 (TPVSTAMTTA…NEVFIPTVKP (443 aa)) is pocket. A spacer region spans residues 620 to 730 (IVARPTLSAE…PAAGGELCAE (111 aa)). Positions 657 to 679 (LPPLPFQKQEHSPDKDEVRSPKR) are disordered. The segment covering 664–679 (KQEHSPDKDEVRSPKR) has biased composition (basic and acidic residues). The interval 731-861 (TGIGVFLSKI…NEVFIPTVKP (131 aa)) is domain B. The interval 868 to 898 (SGTSPNKKNEEKCAADGPYPESPRLSRFPNL) is disordered.

The protein belongs to the retinoblastoma protein (RB) family.

The protein resides in the nucleus. Functionally, regulator of biological processes that recruits a histone deacetylase to control gene transcription. May play a role in the entry into mitosis, negatively regulating the cell proliferation. Formation of stable complexes with geminiviridae replication-associated proteins may create a cellular environment which favors viral DNA replication. This chain is Retinoblastoma-related protein 1 (RBR1), found in Oryza sativa subsp. japonica (Rice).